A 115-amino-acid chain; its full sequence is Protein E6A (115 aa).

Positions 1-25 (MTDKFYFYGLFWGILLFVFLQHMQG) are cleaved as a signal peptide.

The protein is Protein E6A (12) of Equine herpesvirus 2 (strain 86/87) (EHV-2).